The sequence spans 1407 residues: DNA-directed RNA polymerase subunit beta' (1407 aa).

4 residues coordinate Zn(2+): C70, C72, C85, and C88. Residues D460, D462, and D464 each contribute to the Mg(2+) site. Zn(2+)-binding residues include C814, C888, C895, and C898. K972 is subject to N6-acetyllysine.

This sequence belongs to the RNA polymerase beta' chain family. In terms of assembly, the RNAP catalytic core consists of 2 alpha, 1 beta, 1 beta' and 1 omega subunit. When a sigma factor is associated with the core the holoenzyme is formed, which can initiate transcription. Requires Mg(2+) as cofactor. Zn(2+) is required as a cofactor.

The catalysed reaction is RNA(n) + a ribonucleoside 5'-triphosphate = RNA(n+1) + diphosphate. Its function is as follows. DNA-dependent RNA polymerase catalyzes the transcription of DNA into RNA using the four ribonucleoside triphosphates as substrates. This is DNA-directed RNA polymerase subunit beta' from Escherichia coli O1:K1 / APEC.